A 502-amino-acid polypeptide reads, in one-letter code: Probable cytosol aminopeptidase (502 aa).

Residues Lys269 and Asp274 each coordinate Mn(2+). Lys281 is a catalytic residue. Positions 292, 351, and 353 each coordinate Mn(2+). Arg355 is a catalytic residue.

Belongs to the peptidase M17 family. Mn(2+) is required as a cofactor.

The protein resides in the cytoplasm. The enzyme catalyses Release of an N-terminal amino acid, Xaa-|-Yaa-, in which Xaa is preferably Leu, but may be other amino acids including Pro although not Arg or Lys, and Yaa may be Pro. Amino acid amides and methyl esters are also readily hydrolyzed, but rates on arylamides are exceedingly low.. It catalyses the reaction Release of an N-terminal amino acid, preferentially leucine, but not glutamic or aspartic acids.. In terms of biological role, presumably involved in the processing and regular turnover of intracellular proteins. Catalyzes the removal of unsubstituted N-terminal amino acids from various peptides. The protein is Probable cytosol aminopeptidase of Photobacterium profundum (strain SS9).